Consider the following 92-residue polypeptide: Small ribosomal subunit protein uS19c (92 aa).

This sequence belongs to the universal ribosomal protein uS19 family.

The protein resides in the plastid. It localises to the chloroplast. In terms of biological role, protein S19 forms a complex with S13 that binds strongly to the 16S ribosomal RNA. This Nicotiana tomentosiformis (Tobacco) protein is Small ribosomal subunit protein uS19c.